The chain runs to 776 residues: Transferrin receptor protein 1 (776 aa).

At 1–70 (MDHARAALSN…QPQRNGKRLC (70 aa)) the chain is on the cytoplasmic side. Positions 19–22 (YTRF) match the Endocytosis signal motif. The residue at position 23 (Ser23) is a Phosphoserine. Cys70 carries S-palmitoyl cysteine lipidation. The helical; Signal-anchor for type II membrane protein transmembrane segment at 71–91 (FLVIAAVLLLLIGFLIGYLSY) threads the bilayer. Residues 92–776 (RGRIELAARC…GDIWETDNEF (685 aa)) lie on the Extracellular side of the membrane. The region spanning 230–322 (SESGSVSGKP…GTGDPYTPGF (93 aa)) is the PA domain. Asn261, Asn326, and Asn391 each carry an N-linked (GlcNAc...) asparagine glycan. Positions 586–776 (KGDTLENLRK…GDIWETDNEF (191 aa)) are ligand-binding. Positions 662–664 (RGD) match the Cell attachment site motif. Asn738 carries an N-linked (GlcNAc...) asparagine glycan.

Belongs to the peptidase M28 family. M28B subfamily. As to quaternary structure, homodimer; disulfide-linked. Binds one transferrin molecule per subunit. Post-translationally, stearoylated. Stearoylation does not affect iron uptake. In terms of processing, N- and O-glycosylated, phosphorylated and palmitoylated.

The protein localises to the cell membrane. Its subcellular location is the melanosome. Cellular uptake of iron occurs via receptor-mediated endocytosis of ligand-occupied transferrin receptor into specialized endosomes. Endosomal acidification leads to iron release. The apotransferrin-receptor complex is then recycled to the cell surface with a return to neutral pH and the concomitant loss of affinity of apotransferrin for its receptor. Transferrin receptor is necessary for development of erythrocytes and the nervous system. Acts as a lipid sensor that regulates mitochondrial fusion by regulating activation of the JNK pathway. When dietary levels of stearate (C18:0) are low, promotes activation of the JNK pathway, resulting in HUWE1-mediated ubiquitination and subsequent degradation of the mitofusin MFN2 and inhibition of mitochondrial fusion. When dietary levels of stearate (C18:0) are high, TFRC stearoylation inhibits activation of the JNK pathway and thus degradation of the mitofusin MFN2. Mediates uptake of NICOL1 into fibroblasts where it may regulate extracellular matrix production. The protein is Transferrin receptor protein 1 (TFRC) of Gallus gallus (Chicken).